Here is a 518-residue protein sequence, read N- to C-terminus: E3 ubiquitin-protein ligase TRIM39 (518 aa).

The RING-type zinc finger occupies 29–70 (CSVCLEYLKEPVIIECGHNFCKACITRWWEDLERDFPCPVCR). The segment at 102-143 (RDESLCPQHHEALSLFCYEDQEAVCLICAISHTHRAHTVVPL) adopts a B box-type zinc-finger fold. Zn(2+) contacts are provided by cysteine 107, histidine 110, cysteine 129, and histidine 135. Residues 181 to 250 (ELKRLVESRR…AHLAAEVEGK (70 aa)) are a coiled coil. Interaction with CDKN1A stretches follow at residues 268–337 (KNIP…QLIA) and 389–518 (TSGR…TDWE). Residues 319–514 (SNFPRQYFAL…NAAPLTIRPP (196 aa)) enclose the B30.2/SPRY domain.

It belongs to the TRIM/RBCC family. As to quaternary structure, isoform 1 interacts with MOAP1. Isoform 1 and isoform 2 interact with CDKN1A. Isoform 2 interacts (via domain B box-type) with CACTIN. In terms of processing, autoubiquitinated. In terms of tissue distribution, ubiquitous; highly expressed in brain, heart, kidney, liver, skeletal muscle, spleen and testis.

The protein localises to the cytoplasm. It localises to the cytosol. It is found in the mitochondrion. The protein resides in the nucleus. It carries out the reaction S-ubiquitinyl-[E2 ubiquitin-conjugating enzyme]-L-cysteine + [acceptor protein]-L-lysine = [E2 ubiquitin-conjugating enzyme]-L-cysteine + N(6)-ubiquitinyl-[acceptor protein]-L-lysine.. Its pathway is protein modification; protein ubiquitination. Functionally, E3 ubiquitin-protein ligase. May facilitate apoptosis by inhibiting APC/C-Cdh1-mediated poly-ubiquitination and subsequent proteasome-mediated degradation of the pro-apoptotic protein MOAP1. Regulates the G1/S transition of the cell cycle and DNA damage-induced G2 arrest by stabilizing CDKN1A/p21. Positively regulates CDKN1A/p21 stability by competing with DTL for CDKN1A/p21 binding, therefore disrupting DCX(DTL) E3 ubiquitin ligase complex-mediated CDKN1A/p21 ubiquitination and degradation. Regulates the G1/S transition of the cell cycle and DNA damage-induced G2 arrest by stabilizing CDKN1A/p21. Positively regulates CDKN1A/p21 stability by competing with DTL for CDKN1A/p21 binding, therefore disrupting DCX(DTL) E3 ubiquitin ligase complex-mediated CDKN1A/p21 ubiquitination and degradation. Negatively regulates the canonical NF-kappa-B signaling pathway via stabilization of CACTIN in an ubiquitination-independent manner. The sequence is that of E3 ubiquitin-protein ligase TRIM39 (TRIM39) from Homo sapiens (Human).